We begin with the raw amino-acid sequence, 152 residues long: Probable ribose-5-phosphate isomerase B (152 aa).

12-13 (DH) is a D-ribulose 5-phosphate binding site. Cys70 acts as the Proton acceptor in catalysis. 71–75 (GTGVG) is a binding site for D-ribulose 5-phosphate. Catalysis depends on His103, which acts as the Proton donor. Asp104, Arg114, Arg137, and Arg141 together coordinate D-ribulose 5-phosphate.

This sequence belongs to the LacAB/RpiB family. Homodimer.

It carries out the reaction aldehydo-D-ribose 5-phosphate = D-ribulose 5-phosphate. Its pathway is carbohydrate degradation; pentose phosphate pathway; D-ribose 5-phosphate from D-ribulose 5-phosphate (non-oxidative stage): step 1/1. Catalyzes the interconversion of ribulose-5-P and ribose-5-P. This chain is Probable ribose-5-phosphate isomerase B, found in Mycoplasma pneumoniae (strain ATCC 29342 / M129 / Subtype 1) (Mycoplasmoides pneumoniae).